The sequence spans 263 residues: Small ribosomal subunit protein eS4 (263 aa).

Residues 42–104 form the S4 RNA-binding domain; the sequence is LPLVIFLRNR…TNELFRLIYD (63 aa).

The protein belongs to the eukaryotic ribosomal protein eS4 family.

The protein is Small ribosomal subunit protein eS4 (RpS4) of Bombyx mori (Silk moth).